A 128-amino-acid polypeptide reads, in one-letter code: Large ribosomal subunit protein bL12 (128 aa).

The protein belongs to the bacterial ribosomal protein bL12 family. Homodimer. Part of the ribosomal stalk of the 50S ribosomal subunit. Forms a multimeric L10(L12)X complex, where L10 forms an elongated spine to which 2 to 4 L12 dimers bind in a sequential fashion. Binds GTP-bound translation factors.

Functionally, forms part of the ribosomal stalk which helps the ribosome interact with GTP-bound translation factors. Is thus essential for accurate translation. The chain is Large ribosomal subunit protein bL12 from Synechococcus sp. (strain CC9902).